Reading from the N-terminus, the 498-residue chain is Zinc finger protein 497 (498 aa).

Positions 30 to 104 are disordered; sequence SEGAVSGGWG…LRPSPLPEEP (75 aa). 14 consecutive C2H2-type zinc fingers follow at residues 106–128, 134–156, 162–184, 190–212, 218–240, 246–268, 274–296, 302–324, 330–352, 358–380, 386–408, 414–436, 442–464, and 470–492; these read CRCGECGKAFSQGSYLLQHRRVH, YTCPECGKAFAWSSNLSQHQRIH, YACRECGKAFRAHSQLIHHQETH, FRCPDCGKSFGRSTTLVQHRRTH, YECPECGKAFSWNSNFLEHRRVH, HACRDCGKAFSQSSNLAEHLKIH, HACPDCGKAFVRVAGLRQHRRTH, FPCAECGKAFRESSQLLQHQRTH, FECAECGQAFVMGSYLAEHRRVH, HACAQCGKAFSQRSNLLSHRRTH, FACADCGKAFRGSSGLAHHRLSH, FACAECGKAFRGSSELRQHQRLH, FVCAHCSKAFVRKSELLSHRRTH, and YACGECGKPFSHRCNLNEHQKRH.

Belongs to the krueppel C2H2-type zinc-finger protein family.

The protein localises to the nucleus. May be involved in transcriptional regulation. This Homo sapiens (Human) protein is Zinc finger protein 497 (ZNF497).